A 574-amino-acid polypeptide reads, in one-letter code: MDADSINSFFLIGALLAAVSVLLSPMSSRLGIPILLIFLAVGILAGEDGLGGIQFDDYSTAYLVSNLALAIILLDGGMRTRVASFRVALWPALSLATFGVAITTSITGLMAAWLFDLHWLQGLLVGAIVGSTDAAAVFSLLKGRSLNERVGATLEIESGSNDPMAVFLTVTLIAILANVDTELSVSFMLVSFIKQFGLGICLGLGGGWLLWKLVNLSKLAEGLYSILVLSGGLIIYAVSNKLGGSGILSIYLVGLFLGNKPTRGRHSILNVLDGMTWVSQIGMFLVLGLLLTPSDLFDILLPGFALAFGMILFARPLAVWLSLLPFKSFSSRDRWFISWVGLRGAVPIILAVFPMMAGLPGAQLYFNLAFFVVLVSLLIQGASLTTAARLAKVELPPKPLPISRSGVEIYPSSEWEVFVYCLSENKWCVGEPLKRLSMPDGTRIAAVFRGDKLLHPSGSTCLEAGDILCVLGQERSLDALSHLFSQAPETKEVPRFFGDFFIETDVKLADLAPIYGLDLDEEASEMTVADLVASELGAHPVIGDHFQWQSLHWVVAGLHEGKVTNIGIRLPPET.

The next 13 helical transmembrane spans lie at 6-26, 30-50, 58-78, 87-107, 109-129, 173-193, 196-216, 219-239, 242-262, 271-291, 299-319, 335-355, and 359-379; these read INSF…LSPM, LGIP…EDGL, YSTA…DGGM, VALW…TSIT, LMAA…GAIV, IAIL…VSFI, FGLG…LVNL, LAEG…YAVS, LGGS…NKPT, VLDG…GLLL, ILLP…PLAV, WFIS…VFPM, and LPGA…SLLI. The RCK C-terminal domain occupies 405 to 486; it reads SGVEIYPSSE…LDALSHLFSQ (82 aa).

It belongs to the monovalent cation:proton antiporter 1 (CPA1) transporter (TC 2.A.36) family. NhaP2 subfamily.

The protein resides in the cell inner membrane. It catalyses the reaction K(+)(in) + H(+)(out) = K(+)(out) + H(+)(in). Its function is as follows. K(+)/H(+) antiporter that extrudes potassium in exchange for external protons and maintains the internal concentration of potassium under toxic levels. The chain is K(+)/H(+) antiporter NhaP2 from Shewanella sp. (strain W3-18-1).